Here is a 393-residue protein sequence, read N- to C-terminus: Xyloside xylosyltransferase 1 (393 aa).

At 1-23 the chain is on the cytoplasmic side; sequence MGLLRGGLPCARAMARLGAVRSH. The helical; Signal-anchor for type II membrane protein transmembrane segment at 24 to 44 threads the bilayer; that stretch reads YCALLLAAALAVCAFYYLGSG. Residues 45–393 lie on the Lumenal side of the membrane; it reads RETFSSATKR…GNCNTPIPED (349 aa). 104–106 serves as a coordination point for UDP-alpha-D-xylose; the sequence is MFT. Asp-226 lines the Mn(2+) pocket. Leu-227 contacts UDP-alpha-D-xylose. Asp-228 is a binding site for Mn(2+). Positions 263 to 266 are interaction with target proteins; sequence HTFW. Residues Ser-290, Leu-328, and Gln-331 each coordinate UDP-alpha-D-xylose. Positions 331 and 360 each coordinate a glycoprotein. 2 cysteine pairs are disulfide-bonded: Cys-350-Cys-375 and Cys-357-Cys-386. Residue His-383 coordinates Mn(2+). Residue Asn-385 coordinates a glycoprotein.

Belongs to the glycosyltransferase 8 family. Homodimer. Dimer formation may be essential for the retention in endoplasmic reticulum. It depends on Mg(2+) as a cofactor. Mn(2+) is required as a cofactor.

The protein resides in the endoplasmic reticulum membrane. It carries out the reaction 3-O-[alpha-D-xylosyl-(1-&gt;3)-beta-D-glucosyl]-L-seryl-[EGF-like domain protein] + UDP-alpha-D-xylose = 3-O-[alpha-D-xylosyl-(1-&gt;3)-alpha-D-xylosyl-(1-&gt;3)-beta-D-glucosyl]-L-seryl-[EGF-like domain protein] + UDP + H(+). Alpha-1,3-xylosyltransferase, which elongates the O-linked xylose-glucose disaccharide attached to EGF-like repeats in the extracellular domain of target proteins by catalyzing the addition of the second xylose. Known targets include Notch proteins and coagulation factors, such as F9. The chain is Xyloside xylosyltransferase 1 (XXYLT1) from Homo sapiens (Human).